Here is a 775-residue protein sequence, read N- to C-terminus: Glycerol-3-phosphate acyltransferase (775 aa).

The HXXXXD motif motif lies at H268–D273.

It belongs to the GPAT/DAPAT family.

Its subcellular location is the cell membrane. The catalysed reaction is sn-glycerol 3-phosphate + an acyl-CoA = a 1-acyl-sn-glycero-3-phosphate + CoA. It participates in phospholipid metabolism; CDP-diacylglycerol biosynthesis; CDP-diacylglycerol from sn-glycerol 3-phosphate: step 1/3. The sequence is that of Glycerol-3-phosphate acyltransferase (plsB) from Mycobacterium leprae (strain TN).